The sequence spans 94 residues: Aspartyl/glutamyl-tRNA(Asn/Gln) amidotransferase subunit C (94 aa).

The protein belongs to the GatC family. In terms of assembly, heterotrimer of A, B and C subunits.

The enzyme catalyses L-glutamyl-tRNA(Gln) + L-glutamine + ATP + H2O = L-glutaminyl-tRNA(Gln) + L-glutamate + ADP + phosphate + H(+). The catalysed reaction is L-aspartyl-tRNA(Asn) + L-glutamine + ATP + H2O = L-asparaginyl-tRNA(Asn) + L-glutamate + ADP + phosphate + 2 H(+). In terms of biological role, allows the formation of correctly charged Asn-tRNA(Asn) or Gln-tRNA(Gln) through the transamidation of misacylated Asp-tRNA(Asn) or Glu-tRNA(Gln) in organisms which lack either or both of asparaginyl-tRNA or glutaminyl-tRNA synthetases. The reaction takes place in the presence of glutamine and ATP through an activated phospho-Asp-tRNA(Asn) or phospho-Glu-tRNA(Gln). This is Aspartyl/glutamyl-tRNA(Asn/Gln) amidotransferase subunit C from Campylobacter jejuni subsp. jejuni serotype O:6 (strain 81116 / NCTC 11828).